The sequence spans 322 residues: MDPTVPVFGTKLTPINGREETPCYNQTLSFTVLTCIISLVGLTGNAVVLWLLGYRMRRNAVSIYILNLAAADFLFLSFQIIRLPLRLINISHLIRKILVSVMTFPYFTGLSMLSAISTERCLSVLWPIWYRCRRPTHLSAVVCVLLWGLSLLFSMLEWRFCDFLFSGADSSWCETSDFIPVAWLIFLCVVLCVSSLVLLVRILCGSRKMPLTRLYVTILLTVLVFLLCGLPFGILGALIYRMHLNLEVLYCHVYLVCMSLSSLNSSANPIIYFFVGSFRQRQNRQNLKLVLQRALQDKPEVDKGEGQLPEESLELSGSRLGP.

The Extracellular portion of the chain corresponds to 1 to 31; sequence MDPTVPVFGTKLTPINGREETPCYNQTLSFT. A glycan (N-linked (GlcNAc...) asparagine) is linked at Asn-25. The helical transmembrane segment at 32–52 threads the bilayer; sequence VLTCIISLVGLTGNAVVLWLL. Over 53-60 the chain is Cytoplasmic; the sequence is GYRMRRNA. Residues 61-81 traverse the membrane as a helical segment; it reads VSIYILNLAAADFLFLSFQII. Topologically, residues 82–96 are extracellular; that stretch reads RLPLRLINISHLIRK. N-linked (GlcNAc...) asparagine glycosylation occurs at Asn-89. The chain crosses the membrane as a helical span at residues 97–117; that stretch reads ILVSVMTFPYFTGLSMLSAIS. The Cytoplasmic portion of the chain corresponds to 118–137; the sequence is TERCLSVLWPIWYRCRRPTH. The chain crosses the membrane as a helical span at residues 138-158; sequence LSAVVCVLLWGLSLLFSMLEW. Residues 159 to 177 lie on the Extracellular side of the membrane; it reads RFCDFLFSGADSSWCETSD. A helical transmembrane segment spans residues 178–198; it reads FIPVAWLIFLCVVLCVSSLVL. At 199 to 218 the chain is on the cytoplasmic side; it reads LVRILCGSRKMPLTRLYVTI. The helical transmembrane segment at 219–239 threads the bilayer; that stretch reads LLTVLVFLLCGLPFGILGALI. Topologically, residues 240 to 254 are extracellular; sequence YRMHLNLEVLYCHVY. The chain crosses the membrane as a helical span at residues 255–275; sequence LVCMSLSSLNSSANPIIYFFV. Topologically, residues 276-322 are cytoplasmic; that stretch reads GSFRQRQNRQNLKLVLQRALQDKPEVDKGEGQLPEESLELSGSRLGP. The segment at 299–322 is disordered; that stretch reads PEVDKGEGQLPEESLELSGSRLGP.

Belongs to the G-protein coupled receptor 1 family. Mas subfamily. In terms of tissue distribution, uniquely localized in a subset of small dorsal root and trigeminal sensory neurons.

It is found in the cell membrane. Functionally, orphan receptor. Probably involved in the function of nociceptive neurons. May regulate nociceptor function and/or development, including the sensation or modulation of pain. Potently activated by enkephalins. The sequence is that of Mas-related G-protein coupled receptor member X4 (MRGPRX4) from Homo sapiens (Human).